A 92-amino-acid polypeptide reads, in one-letter code: UPF0473 protein OB2006 (92 aa).

The protein belongs to the UPF0473 family.

In Oceanobacillus iheyensis (strain DSM 14371 / CIP 107618 / JCM 11309 / KCTC 3954 / HTE831), this protein is UPF0473 protein OB2006.